Here is a 461-residue protein sequence, read N- to C-terminus: Coronin-1A (461 aa).

At Ser-2 the chain carries N-acetylserine. Ser-2 carries the post-translational modification Phosphoserine; by PKC. 7 WD repeats span residues 13-63 (HVFG…LVLP), 73-110 (NAPT…MVWE), 123-160 (PVVT…MVWD), 164-204 (GAAM…RIIE), 207-251 (KGTV…ALWD), 258-296 (PLSL…RYFE), and 302-349 (PFLH…EPIA). The segment covering 403-418 (ELRVNRGLDTGRRRAA) has biased composition (basic and acidic residues). The tract at residues 403-432 (ELRVNRGLDTGRRRAAPEASGTPSSDAVSR) is disordered. Thr-412 carries the post-translational modification Phosphothreonine; by PKC. At Ser-422 the chain carries Phosphoserine. Residues 424–460 (TPSSDAVSRLEEEMRKLQATVQELQKRLDRLEETVQA) are a coiled coil. N6-acetyllysine is present on Lys-449.

Belongs to the WD repeat coronin family. In terms of assembly, binds actin. Phosphorylation at Thr-412 by PKC strongly down-regulates the association with actin. In terms of processing, polyubiquitinated by RNF128 with 'Lys-48'-linked chains, leading to proteasomal degradation. In terms of tissue distribution, expressed in brain, thymus, spleen, bone marrow and lymph node. Low in lung and gut.

It localises to the cytoplasm. The protein resides in the cytoskeleton. Its subcellular location is the cell cortex. The protein localises to the cytoplasmic vesicle. It is found in the phagosome membrane. May be a crucial component of the cytoskeleton of highly motile cells, functioning both in the invagination of large pieces of plasma membrane, as well as in forming protrusions of the plasma membrane involved in cell locomotion. In mycobacteria-infected cells, its retention on the phagosomal membrane prevents fusion between phagosomes and lysosomes. The protein is Coronin-1A (CORO1A) of Homo sapiens (Human).